Reading from the N-terminus, the 346-residue chain is S-adenosylmethionine:tRNA ribosyltransferase-isomerase (346 aa).

It belongs to the QueA family. Monomer.

Its subcellular location is the cytoplasm. It carries out the reaction 7-aminomethyl-7-carbaguanosine(34) in tRNA + S-adenosyl-L-methionine = epoxyqueuosine(34) in tRNA + adenine + L-methionine + 2 H(+). It functions in the pathway tRNA modification; tRNA-queuosine biosynthesis. In terms of biological role, transfers and isomerizes the ribose moiety from AdoMet to the 7-aminomethyl group of 7-deazaguanine (preQ1-tRNA) to give epoxyqueuosine (oQ-tRNA). This is S-adenosylmethionine:tRNA ribosyltransferase-isomerase from Shewanella denitrificans (strain OS217 / ATCC BAA-1090 / DSM 15013).